The sequence spans 85 residues: Large ribosomal subunit protein bL27 (85 aa).

Belongs to the bacterial ribosomal protein bL27 family.

This Persephonella marina (strain DSM 14350 / EX-H1) protein is Large ribosomal subunit protein bL27.